Here is a 383-residue protein sequence, read N- to C-terminus: Arginine biosynthesis bifunctional protein ArgJ (383 aa).

Residues Thr-146, Lys-168, Thr-179, Glu-259, Asn-378, and Ser-383 each contribute to the substrate site. The active-site Nucleophile is Thr-179.

Belongs to the ArgJ family. In terms of assembly, heterotetramer of two alpha and two beta chains.

The protein localises to the cytoplasm. The enzyme catalyses N(2)-acetyl-L-ornithine + L-glutamate = N-acetyl-L-glutamate + L-ornithine. It catalyses the reaction L-glutamate + acetyl-CoA = N-acetyl-L-glutamate + CoA + H(+). Its pathway is amino-acid biosynthesis; L-arginine biosynthesis; L-ornithine and N-acetyl-L-glutamate from L-glutamate and N(2)-acetyl-L-ornithine (cyclic): step 1/1. It functions in the pathway amino-acid biosynthesis; L-arginine biosynthesis; N(2)-acetyl-L-ornithine from L-glutamate: step 1/4. Functionally, catalyzes two activities which are involved in the cyclic version of arginine biosynthesis: the synthesis of N-acetylglutamate from glutamate and acetyl-CoA as the acetyl donor, and of ornithine by transacetylation between N(2)-acetylornithine and glutamate. This chain is Arginine biosynthesis bifunctional protein ArgJ, found in Streptomyces coelicolor (strain ATCC BAA-471 / A3(2) / M145).